We begin with the raw amino-acid sequence, 67 residues long: Small ribosomal subunit protein eS17 (67 aa).

This sequence belongs to the eukaryotic ribosomal protein eS17 family.

This chain is Small ribosomal subunit protein eS17, found in Haloquadratum walsbyi (strain DSM 16790 / HBSQ001).